Here is a 312-residue protein sequence, read N- to C-terminus: Putative olfactory receptor 1F2 (312 aa).

At 1–25 the chain is on the extracellular side; the sequence is MERDKPVSVSEFLLLGLSRQPQQQH. A helical transmembrane segment spans residues 26 to 49; that stretch reads LLFVFFLSMYLATVLGNLLIILAI. At 50-57 the chain is on the cytoplasmic side; it reads SIDSRLHT. A helical membrane pass occupies residues 58 to 78; it reads PMYFFLSNMSFVDNCFSTTVP. The Extracellular portion of the chain corresponds to 79–99; sequence KMLANHILRTQTISFSGCLMQ. A disulfide bond links Cys96 and Cys188. A helical transmembrane segment spans residues 100–119; the sequence is MYFISELADMDNFLLAVMAY. Over 120–138 the chain is Cytoplasmic; that stretch reads DRFVAVCRPLHYTAKMIHQ. A helical transmembrane segment spans residues 139–157; it reads LCALLVTGSWVVANSNALL. The Extracellular portion of the chain corresponds to 158 to 195; the sequence is HTLLMARLSFCADNTIPHIFCDVTPLLKLSCSDTHLSE. The chain crosses the membrane as a helical span at residues 196-218; that stretch reads VMILTEAALVTITPFLCLLASYM. Over 219–235 the chain is Cytoplasmic; sequence HITCVVLRVPSTKGRWK. Residues 236–258 traverse the membrane as a helical segment; that stretch reads AFSTCGSHLAVVLLFYGTIMSPY. The Extracellular segment spans residues 259 to 271; sequence FRTSSSHSAQRDI. A helical transmembrane segment spans residues 272 to 291; the sequence is AAAVRFTVVTPVMNPLIYSL. Residues 292–312 are Cytoplasmic-facing; the sequence is RNKDIKGALVKVVAVKFFSVQ.

Belongs to the G-protein coupled receptor 1 family.

Its subcellular location is the cell membrane. Odorant receptor. The protein is Putative olfactory receptor 1F2 (OR1F2P) of Homo sapiens (Human).